The primary structure comprises 42 residues: Photosystem II reaction center protein J (42 aa).

The helical transmembrane segment at 10 to 30 (IPLWLVGTVVGTLAIGLLAVF) threads the bilayer.

Belongs to the PsbJ family. As to quaternary structure, PSII is composed of 1 copy each of membrane proteins PsbA, PsbB, PsbC, PsbD, PsbE, PsbF, PsbH, PsbI, PsbJ, PsbK, PsbL, PsbM, PsbT, PsbX, PsbY, PsbZ, Psb30/Ycf12, at least 3 peripheral proteins of the oxygen-evolving complex and a large number of cofactors. It forms dimeric complexes.

The protein resides in the plastid. The protein localises to the chloroplast thylakoid membrane. In terms of biological role, one of the components of the core complex of photosystem II (PSII). PSII is a light-driven water:plastoquinone oxidoreductase that uses light energy to abstract electrons from H(2)O, generating O(2) and a proton gradient subsequently used for ATP formation. It consists of a core antenna complex that captures photons, and an electron transfer chain that converts photonic excitation into a charge separation. In Chlamydomonas reinhardtii (Chlamydomonas smithii), this protein is Photosystem II reaction center protein J.